Reading from the N-terminus, the 375-residue chain is 4-hydroxy-3-methylbut-2-en-1-yl diphosphate synthase (flavodoxin) (375 aa).

4 residues coordinate [4Fe-4S] cluster: Cys-270, Cys-273, Cys-305, and Glu-312.

The protein belongs to the IspG family. Requires [4Fe-4S] cluster as cofactor.

It catalyses the reaction (2E)-4-hydroxy-3-methylbut-2-enyl diphosphate + oxidized [flavodoxin] + H2O + 2 H(+) = 2-C-methyl-D-erythritol 2,4-cyclic diphosphate + reduced [flavodoxin]. It functions in the pathway isoprenoid biosynthesis; isopentenyl diphosphate biosynthesis via DXP pathway; isopentenyl diphosphate from 1-deoxy-D-xylulose 5-phosphate: step 5/6. In terms of biological role, converts 2C-methyl-D-erythritol 2,4-cyclodiphosphate (ME-2,4cPP) into 1-hydroxy-2-methyl-2-(E)-butenyl 4-diphosphate. The polypeptide is 4-hydroxy-3-methylbut-2-en-1-yl diphosphate synthase (flavodoxin) (Yersinia pseudotuberculosis serotype IB (strain PB1/+)).